The sequence spans 333 residues: Probable G-protein coupled receptor 33 (333 aa).

Residues 1-30 (MDLINSTDYLINASTLVRNSTQFLAPASKM) lie on the Extracellular side of the membrane. Asparagine 5, asparagine 12, and asparagine 19 each carry an N-linked (GlcNAc...) asparagine glycan. The chain crosses the membrane as a helical span at residues 31–53 (IIALSLYISSIIGTITNGLYLWV). Over 54-64 (LRFKMKQTVNT) the chain is Cytoplasmic. A helical transmembrane segment spans residues 65 to 86 (LLFFHLILSYFISTMILPFMAT). Topologically, residues 87–103 (SQLQDNHWNFGTALCKV) are extracellular. Cysteine 101 and cysteine 179 are disulfide-bonded. Residues 104–124 (FNGTLSLGMFTSVFFLSAIGL) traverse the membrane as a helical segment. Residues 125–143 (DRYLLTLHPVWSQQHRTPR) are Cytoplasmic-facing. A helical transmembrane segment spans residues 144-165 (WASSIVLGVWISAAALSIPYLI). Residues 166-209 (FRQTHHDRKGKVTCQNNYAVSTNWESKEMQALRQWIHVACFISR) are Extracellular-facing. Residues 210–230 (FLLGFLLPFFIIIFCYERVAS) form a helical membrane-spanning segment. Residues 231-246 (KVKERSLFKSSKPFKV) lie on the Cytoplasmic side of the membrane. Residues 247–268 (MMTAIISFFVCWMPYHIHQGLL) traverse the membrane as a helical segment. Residues 269-283 (LTMNQSLLLELTLIL) lie on the Extracellular side of the membrane. Residue asparagine 272 is glycosylated (N-linked (GlcNAc...) asparagine). The chain crosses the membrane as a helical span at residues 284–303 (TVLTTSFNTIFSPTLYLFVG). Residues 304 to 333 (ENFKKVFKKSILALFESTFSEDSSVERTQT) are Cytoplasmic-facing.

The protein belongs to the G-protein coupled receptor 1 family.

It is found in the cell membrane. Functionally, orphan receptor; could be a chemoattractant receptor. The chain is Probable G-protein coupled receptor 33 (GPR33) from Pan paniscus (Pygmy chimpanzee).